A 262-amino-acid polypeptide reads, in one-letter code: MIDKSAFIHPTAIVEDGAVLGANVHIGPFCIVGPQVEIGEGTVLKSHVVVNGQTKIGRDNEIYQFASIGEVNQDLKYAGEPTRVEIGDRNRIRESVTIHRGTVQGGGLTKVGSDNLLMINAHVAHDCTVGNRCILANNATLAGHVSIDDFAIIGGMTAVHQFCIIGAHVMVGGCSGVAQDVPPYVIAQGNHATPFGVNIEGLKRRGFSREGIVAIRNAYKLLYRSGKTLDDAKLEIAELAEKHPEVKAFTEFFERSTRGPIR.

The protein belongs to the transferase hexapeptide repeat family. LpxA subfamily. In terms of assembly, homotrimer.

It is found in the cytoplasm. It carries out the reaction a (3R)-hydroxyacyl-[ACP] + UDP-N-acetyl-alpha-D-glucosamine = a UDP-3-O-[(3R)-3-hydroxyacyl]-N-acetyl-alpha-D-glucosamine + holo-[ACP]. The protein operates within glycolipid biosynthesis; lipid IV(A) biosynthesis; lipid IV(A) from (3R)-3-hydroxytetradecanoyl-[acyl-carrier-protein] and UDP-N-acetyl-alpha-D-glucosamine: step 1/6. In terms of biological role, involved in the biosynthesis of lipid A, a phosphorylated glycolipid that anchors the lipopolysaccharide to the outer membrane of the cell. The chain is Acyl-[acyl-carrier-protein]--UDP-N-acetylglucosamine O-acyltransferase from Salmonella arizonae (strain ATCC BAA-731 / CDC346-86 / RSK2980).